A 494-amino-acid chain; its full sequence is Neuronal acetylcholine receptor subunit alpha-6 (494 aa).

The signal sequence occupies residues 1–31 (MHPKRRLCWCLPASGAWAFMLTSLIADTTAC). The Extracellular segment spans residues 32–240 (ESEERLFHKL…TYSFYIRRLP (209 aa)). 2 N-linked (GlcNAc...) asparagine glycosylation sites follow: asparagine 54 and asparagine 171. Cysteine 158 and cysteine 172 are joined by a disulfide. 3 helical membrane passes run 241–265 (MFYT…FYLP), 272–290 (VTLC…LVIT), and 306–327 (YLLF…VLNI). At 328–468 (HYRTPTTHTM…WKYVAMVIDR (141 aa)) the chain is on the cytoplasmic side. The tract at residues 364 to 390 (KNISKKTKKGSAKTSGKSKHSKHKDNK) is disordered. A compositionally biased stretch (basic residues) spans 366-390 (ISKKTKKGSAKTSGKSKHSKHKDNK). The chain crosses the membrane as a helical span at residues 469–489 (VFLWVFIILCVFGTAGLFIQP).

It belongs to the ligand-gated ion channel (TC 1.A.9) family. Acetylcholine receptor (TC 1.A.9.1) subfamily. Alpha-6/CHRNA6 sub-subfamily. As to quaternary structure, neuronal AChR is composed of two different types of subunits: alpha and non-alpha (beta). CHRNA6/alpha-6 subunit can be combined to CHRNB2/beta-2, CHRNA4/alpha-4 and CHRNB3/beta-3 to give rise to functional receptors. Heteropentamers containing CHRNB3 have an stoichiometry of (CHRNA6:CHRNB2)2:CHRNB3. Interacts with LYPD6.

It is found in the synaptic cell membrane. The enzyme catalyses K(+)(in) = K(+)(out). The catalysed reaction is Na(+)(in) = Na(+)(out). It carries out the reaction Ca(2+)(in) = Ca(2+)(out). Activated by a myriad of ligands such as acetylcholine, cytisine and nicotine. CHRNA6 nAChR activity is inhibited by the antagonists alpha-conotoxin MII and PIA, a small disulfide-constrained peptides from cone snails. Its function is as follows. Component of neuronal acetylcholine receptors (nAChRs) that function as pentameric, ligand-gated cation channels with high calcium permeability among other activities. nAChRs are excitatory neurotrasnmitter receptors formed by a collection of nAChR subunits known to mediate synaptic transmission in the nervous system and the neuromuscular junction. Each nAchR subunit confers differential attributes to channel properties, including activation, deactivation and desensitization kinetics, pH sensitivity, cation permeability, and binding to allosteric modulators. CHRNA6 forms pentameric channels with CHRNB2 and CHRNA4 that exhibit high sensitivity to ACh and nicotine and are predominantly expressed in only a few brain areas, including dopaminergic neurons, norepirephrine neurons and cells of the visual system. nAChrs containing CHRNA6 subunits mediate endogenous cholinergic modulation of dopamine and gamma-aminobutyric acid (GABA) release in response to nicotine at nerve terminals. Component of neuronal acetylcholine receptors (nAChRs) that function as pentameric, ligand-gated cation channels with high calcium permeability among other activities. nAChRs are excitatory neurotrasnmitter receptors formed by a collection of nAChR subunits known to mediate synaptic transmission in the nervous system and the neuromuscular junction. Each nAchR subunit confers differential attributes to channel properties, including activation, deactivation and desensitization kinetics, pH sensitivity, cation permeability, and binding to allosteric modulators. CHRNA6 forms pentameric channels with CHRNB2, CHRNB3 and CHRNA4 that exhibit high sensitivity to ACh and nicotine and are predominantly expressed in only a few brain areas, including dopaminergic neurons, norepirephrine neurons and cells of the visual system. nAChrs containing CHRNA6 subunits mediate endogenous cholinergic modulation of dopamine and gamma-aminobutyric acid (GABA) release in response to nicotine at nerve terminals. In Gallus gallus (Chicken), this protein is Neuronal acetylcholine receptor subunit alpha-6 (CHRNA6).